The primary structure comprises 147 residues: Large ribosomal subunit protein uL15 (147 aa).

The interval 1-42 (MTIKVHHLRPAPGAKTTKTRVGRGEGSKGKTAGRGTKGSKAR) is disordered.

This sequence belongs to the universal ribosomal protein uL15 family. In terms of assembly, part of the 50S ribosomal subunit.

Functionally, binds to the 23S rRNA. This Salinispora tropica (strain ATCC BAA-916 / DSM 44818 / JCM 13857 / NBRC 105044 / CNB-440) protein is Large ribosomal subunit protein uL15.